Consider the following 243-residue polypeptide: DNA repair protein RecO (243 aa).

This sequence belongs to the RecO family.

Its function is as follows. Involved in DNA repair and RecF pathway recombination. The chain is DNA repair protein RecO from Thermobifida fusca (strain YX).